The chain runs to 180 residues: D(1A) dopamine receptor (180 aa).

A helical transmembrane segment spans residues Asn-1–Ile-10. Over Arg-11 to Asn-21 the chain is Cytoplasmic. A helical membrane pass occupies residues Phe-22–Ala-48. At Gly-49–Cys-57 the chain is on the extracellular side. An intrachain disulfide couples Cys-57 to Cys-147. A helical membrane pass occupies residues Asn-58–Val-80. Topologically, residues Asp-81–Lys-99 are cytoplasmic. Residues Ala-100–Trp-124 traverse the membrane as a helical segment. Topologically, residues His-125–Arg-153 are extracellular. The N-linked (GlcNAc...) asparagine glycan is linked to Asn-136. A helical membrane pass occupies residues Thr-154–His-179. Residue Arg-180 is a topological domain, cytoplasmic.

It belongs to the G-protein coupled receptor 1 family. As to quaternary structure, interacts with DNAJC14 via its C-terminus. Interacts with DRD2. Interacts with DORIP1.

The protein resides in the cell membrane. Its subcellular location is the endoplasmic reticulum membrane. It is found in the cell projection. It localises to the cilium membrane. In terms of biological role, dopamine receptor whose activity is mediated by G proteins which activate adenylyl cyclase. This Oryctolagus cuniculus (Rabbit) protein is D(1A) dopamine receptor (DRD1).